The chain runs to 275 residues: Formamidopyrimidine-DNA glycosylase (275 aa).

The Schiff-base intermediate with DNA role is filled by proline 2. Catalysis depends on glutamate 3, which acts as the Proton donor. Lysine 58 (proton donor; for beta-elimination activity) is an active-site residue. DNA is bound by residues histidine 91, arginine 109, and arginine 154. Residues 240 to 274 form an FPG-type zinc finger; that stretch reads AVYERAGLPCRVCGTPIRRLVQGQRATYYCPSCQK. The active-site Proton donor; for delta-elimination activity is the arginine 264.

It belongs to the FPG family. As to quaternary structure, monomer. Zn(2+) serves as cofactor.

The enzyme catalyses Hydrolysis of DNA containing ring-opened 7-methylguanine residues, releasing 2,6-diamino-4-hydroxy-5-(N-methyl)formamidopyrimidine.. It carries out the reaction 2'-deoxyribonucleotide-(2'-deoxyribose 5'-phosphate)-2'-deoxyribonucleotide-DNA = a 3'-end 2'-deoxyribonucleotide-(2,3-dehydro-2,3-deoxyribose 5'-phosphate)-DNA + a 5'-end 5'-phospho-2'-deoxyribonucleoside-DNA + H(+). Involved in base excision repair of DNA damaged by oxidation or by mutagenic agents. Acts as a DNA glycosylase that recognizes and removes damaged bases. Has a preference for oxidized purines, such as 7,8-dihydro-8-oxoguanine (8-oxoG). Has AP (apurinic/apyrimidinic) lyase activity and introduces nicks in the DNA strand. Cleaves the DNA backbone by beta-delta elimination to generate a single-strand break at the site of the removed base with both 3'- and 5'-phosphates. In Bordetella petrii (strain ATCC BAA-461 / DSM 12804 / CCUG 43448), this protein is Formamidopyrimidine-DNA glycosylase.